We begin with the raw amino-acid sequence, 85 residues long: Probable Sec-independent protein translocase protein TatE (85 aa).

A helical membrane pass occupies residues 1 to 21 (MEGLSITKLLVVGILIVLLFG). The segment at 64-85 (KTVAETKAASDSQAAASVERKD) is disordered.

Belongs to the TatA/E family. TatE subfamily.

The protein resides in the cell inner membrane. Its function is as follows. Part of the twin-arginine translocation (Tat) system that transports large folded proteins containing a characteristic twin-arginine motif in their signal peptide across membranes. TatE shares overlapping functions with TatA. This chain is Probable Sec-independent protein translocase protein TatE, found in Yersinia pestis.